The primary structure comprises 206 residues: Flavin reductase (NADPH) (206 aa).

8 residues coordinate NADP(+): Gly-10, Thr-12, Gly-13, Gln-14, Thr-15, Arg-35, Ser-38, and Arg-39. Ser-42 carries the phosphoserine modification. NADP(+) contacts are provided by Asp-54, Val-55, Leu-75, Gly-76, and Arg-78. Ser-82 carries the phosphoserine modification. The NADP(+) site is built by Met-87, Cys-109, His-132, His-153, and Ile-154. Cys-109 (S-nitroso-cysteine intermediate; for S-nitroso-CoA-dependent nitrosyltransferase activity) is an active-site residue. Cys-188 serves as the catalytic S-nitroso-cysteine intermediate; for S-nitroso-CoA-dependent nitrosyltransferase activity.

Belongs to the BLVRB family. In terms of assembly, monomer. As to expression, predominantly expressed in liver and erythrocytes. At lower levels in heart, lung, adrenal gland and cerebrum. Expressed in adult red blood cells.

The protein localises to the cytoplasm. The enzyme catalyses reduced riboflavin + NADP(+) = riboflavin + NADPH + 2 H(+). The catalysed reaction is bilirubin IXbeta + NADP(+) = biliverdin IXbeta + NADPH + H(+). It carries out the reaction FMNH2 + NAD(+) = FMN + NADH + 2 H(+). It catalyses the reaction FMNH2 + NADP(+) = FMN + NADPH + 2 H(+). The enzyme catalyses S-nitroso-CoA + L-cysteinyl-[protein] = S-nitroso-L-cysteinyl-[protein] + CoA. The catalysed reaction is L-cysteinyl-[SCAN] + S-nitroso-CoA = S-nitroso-L-cysteinyl-[SCAN] + CoA. It carries out the reaction S-nitroso-L-cysteinyl-[SCAN] + L-cysteinyl-[protein] = L-cysteinyl-[SCAN] + S-nitroso-L-cysteinyl-[protein]. With respect to regulation, mesobiliverdin acts as a competitive inhibitor for flavin reduction, indicating that flavin and tetrapyrrole substrates compete for the same site. Inhibited by a wide range of xanthene-based drugs, such as phloxine B, erythrosin B, tamibarotene, sulfasalazine, olsalazine, febuxostat, ataluren (PTC124) and deferasirox. Its function is as follows. Enzyme that can both act as a NAD(P)H-dependent reductase and a S-nitroso-CoA-dependent nitrosyltransferase. Promotes fetal heme degradation during development. Also expressed in adult tissues, where it acts as a regulator of hematopoiesis, intermediary metabolism (glutaminolysis, glycolysis, TCA cycle and pentose phosphate pathway) and insulin signaling. Has a broad specificity oxidoreductase activity by catalyzing the NAD(P)H-dependent reduction of a variety of flavins, such as riboflavin, FAD or FMN, biliverdins, methemoglobin and PQQ (pyrroloquinoline quinone). Contributes to fetal heme catabolism by catalyzing reduction of biliverdin IXbeta into bilirubin IXbeta in the liver. Biliverdin IXbeta, which constitutes the major heme catabolite in the fetus is not present in adult. Does not reduce bilirubin IXalpha. Can also reduce the complexed Fe(3+) iron to Fe(2+) in the presence of FMN and NADPH. Acts as a protein nitrosyltransferase by catalyzing nitrosylation of cysteine residues of target proteins, such as HMOX2, INSR and IRS1. S-nitroso-CoA-dependent nitrosyltransferase activity is mediated via a 'ping-pong' mechanism: BLVRB first associates with both S-nitroso-CoA and protein substrate, nitric oxide group is then transferred from S-nitroso-CoA to Cys-109 and Cys-188 residues of BLVRB and from S-nitroso-BLVRB to the protein substrate. Inhibits insulin signaling by mediating nitrosylation of INSR and IRS1, leading to their inhibition. The chain is Flavin reductase (NADPH) from Homo sapiens (Human).